The following is a 467-amino-acid chain: MKVKTRFAPSPTGNLHIGSIRTALYSWLFARHHNGKFVLRIEDTDLVRSELISIDSIFNGLKWLGLNWDEGPYFQTKRLDRYKEVINVMLEKEDAYICVCSCQELEEIRKKQIEKGNKPRYPGTCRNLNIKNISNQNHVIRFKNPLFGKVKFQDKIRGEIVFDNAELDDLVIQRSNGMPTYNFCVVVDDMDMKITHVIRGEDHISNTPRQINILNSLKVKIPVYAHLSMILDEKGNKISKRKNAINIIEYYENGFLPEALLNYIIRLGWSYGDKEIFNLSEMKELFNLKSITKSSSTVNFKKLLWMNKYYINNSPLDYVSDCLKNYMEKKNINVEKGPDLELLVKLFRSRHHTLKEITESCRYFYEEINFFNHTVIEKYFTRKNCFILQTCYKKIEKLSIWDNKNISKIINDVSELIKVTKKEISMILRISMTGDICSPSISTVILLIGKEKALLRINNVVNYIKNL.

A 'HIGH' region motif is present at residues 9 to 19; it reads PSPTGNLHIGS. Residues 237–241 carry the 'KMSKS' region motif; sequence KISKR. Lys240 is an ATP binding site.

Belongs to the class-I aminoacyl-tRNA synthetase family. Glutamate--tRNA ligase type 1 subfamily. Monomer.

The protein localises to the cytoplasm. The enzyme catalyses tRNA(Glu) + L-glutamate + ATP = L-glutamyl-tRNA(Glu) + AMP + diphosphate. In terms of biological role, catalyzes the attachment of glutamate to tRNA(Glu) in a two-step reaction: glutamate is first activated by ATP to form Glu-AMP and then transferred to the acceptor end of tRNA(Glu). The polypeptide is Glutamate--tRNA ligase (Buchnera aphidicola subsp. Acyrthosiphon pisum (strain APS) (Acyrthosiphon pisum symbiotic bacterium)).